Here is a 441-residue protein sequence, read N- to C-terminus: Tol-Pal system protein TolB (441 aa).

An N-terminal signal peptide occupies residues 1–23 (MRNAIATVLLGLAMLLPVGAVQA). Residues 420–441 (RNLKPVKTPDGASDPSWSPLQN) are disordered.

This sequence belongs to the TolB family. As to quaternary structure, the Tol-Pal system is composed of five core proteins: the inner membrane proteins TolA, TolQ and TolR, the periplasmic protein TolB and the outer membrane protein Pal. They form a network linking the inner and outer membranes and the peptidoglycan layer.

It is found in the periplasm. Functionally, part of the Tol-Pal system, which plays a role in outer membrane invagination during cell division and is important for maintaining outer membrane integrity. The chain is Tol-Pal system protein TolB from Ruegeria sp. (strain TM1040) (Silicibacter sp.).